A 429-amino-acid chain; its full sequence is Glutamate-1-semialdehyde 2,1-aminomutase 1 (429 aa).

Lys-268 bears the N6-(pyridoxal phosphate)lysine mark.

This sequence belongs to the class-III pyridoxal-phosphate-dependent aminotransferase family. HemL subfamily. As to quaternary structure, homodimer. Pyridoxal 5'-phosphate is required as a cofactor.

The protein localises to the cytoplasm. The catalysed reaction is (S)-4-amino-5-oxopentanoate = 5-aminolevulinate. The protein operates within porphyrin-containing compound metabolism; protoporphyrin-IX biosynthesis; 5-aminolevulinate from L-glutamyl-tRNA(Glu): step 2/2. This is Glutamate-1-semialdehyde 2,1-aminomutase 1 from Staphylococcus saprophyticus subsp. saprophyticus (strain ATCC 15305 / DSM 20229 / NCIMB 8711 / NCTC 7292 / S-41).